The following is a 187-amino-acid chain: 3-deoxy-D-manno-octulosonate 8-phosphate phosphatase KdsC (187 aa).

2 residues coordinate Mg(2+): aspartate 31 and aspartate 33. Residues aspartate 33, 54-58, arginine 62, arginine 77, arginine 85, and lysine 101 each bind substrate; that span reads NVRDG. Aspartate 124 contacts Mg(2+).

This sequence belongs to the KdsC family. Homotetramer. Mg(2+) is required as a cofactor.

The catalysed reaction is 3-deoxy-alpha-D-manno-2-octulosonate-8-phosphate + H2O = 3-deoxy-alpha-D-manno-oct-2-ulosonate + phosphate. Its pathway is carbohydrate biosynthesis; 3-deoxy-D-manno-octulosonate biosynthesis; 3-deoxy-D-manno-octulosonate from D-ribulose 5-phosphate: step 3/3. It participates in bacterial outer membrane biogenesis; lipopolysaccharide biosynthesis. In terms of biological role, catalyzes the hydrolysis of 3-deoxy-D-manno-octulosonate 8-phosphate (KDO 8-P) to 3-deoxy-D-manno-octulosonate (KDO) and inorganic phosphate. This chain is 3-deoxy-D-manno-octulosonate 8-phosphate phosphatase KdsC (kdsC), found in Yersinia pestis.